The chain runs to 368 residues: Cytoskeleton protein RodZ (368 aa).

Topologically, residues 1–111 are cytoplasmic; that stretch reads MNTEASQDQT…LGKKHKKRDG (111 aa). An HTH cro/C1-type domain is found at 19-79; it reads LRQARESLGL…KLVHLPEDEL (61 aa). The segment at residues 30-49 is a DNA-binding region (H-T-H motif); the sequence is QQTVAERLCLKVSTIRDIEE. A helical; Signal-anchor for type II membrane protein membrane pass occupies residues 112-132; it reads WLMSFTWLIVLVVLGLTGAWW. Residues 133-368 lie on the Periplasmic side of the membrane; it reads WQNHQAQQAE…RVARLTVGVE (236 aa). A disordered region spans residues 151 to 243; that stretch reads SAQLSQNGGQ…STEPVDTANT (93 aa). Over residues 193-221 the composition is skewed to low complexity; that stretch reads STSAVTNSATTSSATTSSVPTTSSVPKTT. Residues 229-243 show a composition bias toward polar residues; that stretch reads VPKTNSTEPVDTANT.

This sequence belongs to the RodZ family.

The protein localises to the cell inner membrane. Functionally, cytoskeletal protein that is involved in cell-shape control through regulation of the length of the long axis. In Yersinia pseudotuberculosis serotype O:3 (strain YPIII), this protein is Cytoskeleton protein RodZ.